Consider the following 105-residue polypeptide: Urease subunit beta (105 aa).

The protein belongs to the urease beta subunit family. Heterotrimer of UreA (gamma), UreB (beta) and UreC (alpha) subunits. Three heterotrimers associate to form the active enzyme.

Its subcellular location is the cytoplasm. It carries out the reaction urea + 2 H2O + H(+) = hydrogencarbonate + 2 NH4(+). It functions in the pathway nitrogen metabolism; urea degradation; CO(2) and NH(3) from urea (urease route): step 1/1. This Prochlorococcus marinus (strain MIT 9313) protein is Urease subunit beta.